Here is a 156-residue protein sequence, read N- to C-terminus: Ribosomal RNA large subunit methyltransferase H (156 aa).

S-adenosyl-L-methionine-binding positions include L73, G104, and 123 to 128 (LSSLTL).

This sequence belongs to the RNA methyltransferase RlmH family. As to quaternary structure, homodimer.

It localises to the cytoplasm. It carries out the reaction pseudouridine(1915) in 23S rRNA + S-adenosyl-L-methionine = N(3)-methylpseudouridine(1915) in 23S rRNA + S-adenosyl-L-homocysteine + H(+). Specifically methylates the pseudouridine at position 1915 (m3Psi1915) in 23S rRNA. In Ralstonia pickettii (strain 12J), this protein is Ribosomal RNA large subunit methyltransferase H.